The following is a 212-amino-acid chain: Methylthioribulose-1-phosphate dehydratase (212 aa).

Zn(2+) contacts are provided by H97 and H99.

Belongs to the aldolase class II family. MtnB subfamily. In terms of assembly, homotetramer. Requires Zn(2+) as cofactor.

It carries out the reaction 5-(methylsulfanyl)-D-ribulose 1-phosphate = 5-methylsulfanyl-2,3-dioxopentyl phosphate + H2O. The protein operates within amino-acid biosynthesis; L-methionine biosynthesis via salvage pathway; L-methionine from S-methyl-5-thio-alpha-D-ribose 1-phosphate: step 2/6. Catalyzes the dehydration of methylthioribulose-1-phosphate (MTRu-1-P) into 2,3-diketo-5-methylthiopentyl-1-phosphate (DK-MTP-1-P). The protein is Methylthioribulose-1-phosphate dehydratase of Bacillus cereus (strain ATCC 10987 / NRS 248).